We begin with the raw amino-acid sequence, 507 residues long: ATP synthase subunit alpha, chloroplastic (507 aa).

Residue 170 to 177 coordinates ATP; the sequence is GDRQTGKT. Thr-257 carries the phosphothreonine modification.

The protein belongs to the ATPase alpha/beta chains family. In terms of assembly, F-type ATPases have 2 components, CF(1) - the catalytic core - and CF(0) - the membrane proton channel. CF(1) has five subunits: alpha(3), beta(3), gamma(1), delta(1), epsilon(1). CF(0) has four main subunits: a, b, b' and c.

The protein resides in the plastid. It is found in the chloroplast thylakoid membrane. It carries out the reaction ATP + H2O + 4 H(+)(in) = ADP + phosphate + 5 H(+)(out). Produces ATP from ADP in the presence of a proton gradient across the membrane. The alpha chain is a regulatory subunit. The polypeptide is ATP synthase subunit alpha, chloroplastic (Lobularia maritima (Sweet alyssum)).